A 590-amino-acid chain; its full sequence is DNA primase (590 aa).

The CHC2-type zinc finger occupies 37–61; that stretch reads CPFHKEKTPSFSVSPTKQFYHCFSC. The Toprim domain maps to 255–337; the sequence is GRILVVEGYM…DKSLHFLFLP (83 aa). Mg(2+) is bound by residues E261, D305, and D307.

It belongs to the DnaG primase family. In terms of assembly, monomer. Interacts with DnaB. The cofactor is Zn(2+). Mg(2+) serves as cofactor.

It catalyses the reaction ssDNA + n NTP = ssDNA/pppN(pN)n-1 hybrid + (n-1) diphosphate.. RNA polymerase that catalyzes the synthesis of short RNA molecules used as primers for DNA polymerase during DNA replication. This Neisseria meningitidis serogroup A / serotype 4A (strain DSM 15465 / Z2491) protein is DNA primase.